The chain runs to 485 residues: MAKLVLSLCFLLFSGCFALREQAQQNECQIQKLNALKPDNRIESEGGFIETWNPNNKPFQCAGVALSRCTLNRNALRRPSYTNGPQEIYIQQGNGIFGMIFPGCPSTYQEPQESQQRGRSQRPQDRHQKVHRFREGDLIAVPTGVAWWMYNNEDTPVVAVSIIDTNSLENQLDQMPRRFYLAGNQEQEFLKYQQQQQGGSQSQKGKQQEEENEGSNILSGFAPEFLKEAFGVNMQIVRNLQGENEEEDSGAIVTVKGGLRVTAPAMRKPQQEEDDDDEEEQPQCVETDKGCQRQSKRSRNGIDETICTMRLRQNIGQNSSPDIYNPQAGSITTATSLDFPALWLLKLSAQYGSLRKNAMFVPHYTLNANSIIYALNGRALVQVVNCNGERVFDGELQEGGVLIVPQNFAVAAKSQSDNFEYVSFKTNDRPSIGNLAGANSLLNALPEEVIQHTFNLKSQQARQVKNNNPFSFLVPPQESQRRAVA.

A signal peptide spans 1 to 18; that stretch reads MAKLVLSLCFLLFSGCFA. 2 disulfide bridges follow: Cys28–Cys61 and Cys104–Cys307. Residues 33–238 enclose the Cupin type-1 1 domain; the sequence is LNALKPDNRI…AFGVNMQIVR (206 aa). Residues 108-118 show a composition bias toward polar residues; the sequence is YQEPQESQQRG. 3 disordered regions span residues 108-130, 192-215, and 262-298; these read YQEP…HQKV, YQQQ…NEGS, and TAPA…SKRS. Residues 192–205 show a composition bias toward low complexity; sequence YQQQQQGGSQSQKG. The segment covering 272-281 has biased composition (acidic residues); it reads EEDDDDEEEQ. A propeptide spanning residues 297–300 is cleaved from the precursor; sequence RSRN. The region spanning 313 to 462 is the Cupin type-1 2 domain; that stretch reads QNIGQNSSPD…TFNLKSQQAR (150 aa). A Vacuolar targeting signal motif is present at residues 476 to 485; it reads PQESQRRAVA. Positions 481–485 are excised as a propeptide; sequence RRAVA.

The protein belongs to the 11S seed storage protein (globulins) family. As to quaternary structure, hexamer; each subunit is composed of an acidic and a basic chain derived from a single precursor and linked by a disulfide bond. In terms of processing, during soybean germination, seed storage proteins are hydrolyzed by protease/26S proteasome. Exclusively in seeds during embryogenesis.

The protein resides in the endoplasmic reticulum. It is found in the protein storage vacuole. Its function is as follows. Glycinin is the major seed storage protein of soybean. Glycinin basic peptides (GBPs), and, to a lower extent, glycinin exhibit antibacterial activity against Gram-negative and Gram-positive bacteria (e.g. L.monocytogenes, B.subtilis, E.coli and S.enteritidis) by forming pores and aggregating in transmembranes, leading to membrane permeability and, eventually, cell death. The sequence is that of Glycinin G2 from Glycine max (Soybean).